The chain runs to 271 residues: Phosphonoacetaldehyde hydrolase (271 aa).

The active-site Nucleophile is the Asp12. Mg(2+)-binding residues include Asp12 and Ala14. Catalysis depends on Lys54, which acts as the Schiff-base intermediate with substrate. Residue Asp188 coordinates Mg(2+).

The protein belongs to the HAD-like hydrolase superfamily. PhnX family. Homodimer. The cofactor is Mg(2+).

It catalyses the reaction phosphonoacetaldehyde + H2O = acetaldehyde + phosphate + H(+). Functionally, involved in phosphonate degradation. In Aliivibrio salmonicida (strain LFI1238) (Vibrio salmonicida (strain LFI1238)), this protein is Phosphonoacetaldehyde hydrolase.